Consider the following 145-residue polypeptide: 3-hydroxyacyl-[acyl-carrier-protein] dehydratase FabZ (145 aa).

The active site involves His49.

It belongs to the thioester dehydratase family. FabZ subfamily.

The protein localises to the cytoplasm. The enzyme catalyses a (3R)-hydroxyacyl-[ACP] = a (2E)-enoyl-[ACP] + H2O. Its function is as follows. Involved in unsaturated fatty acids biosynthesis. Catalyzes the dehydration of short chain beta-hydroxyacyl-ACPs and long chain saturated and unsaturated beta-hydroxyacyl-ACPs. The protein is 3-hydroxyacyl-[acyl-carrier-protein] dehydratase FabZ of Rickettsia massiliae (strain Mtu5).